Reading from the N-terminus, the 191-residue chain is Probable DNA-directed RNA polymerase subunit delta (191 aa).

Positions 14–83 (LSMIEVARAI…GENKWGLRSW (70 aa)) constitute an HTH HARE-type domain. A disordered region spans residues 119-191 (EDAIDYRDDD…EDEEDEEPVL (73 aa)).

RNAP is composed of a core of 2 alpha, a beta and a beta' subunits. The core is associated with a delta subunit and one of several sigma factors.

Its function is as follows. Participates in both the initiation and recycling phases of transcription. In the presence of the delta subunit, RNAP displays an increased specificity of transcription, a decreased affinity for nucleic acids, and an increased efficiency of RNA synthesis because of enhanced recycling. The protein is Probable DNA-directed RNA polymerase subunit delta of Streptococcus pyogenes serotype M6 (strain ATCC BAA-946 / MGAS10394).